The sequence spans 491 residues: Galactose-1-phosphate uridylyltransferase 1 (491 aa).

It belongs to the galactose-1-phosphate uridylyltransferase type 2 family.

It localises to the cytoplasm. The enzyme catalyses alpha-D-galactose 1-phosphate + UDP-alpha-D-glucose = alpha-D-glucose 1-phosphate + UDP-alpha-D-galactose. Its pathway is carbohydrate metabolism; galactose metabolism. The sequence is that of Galactose-1-phosphate uridylyltransferase 1 (galT1) from Streptococcus pneumoniae serotype 4 (strain ATCC BAA-334 / TIGR4).